The primary structure comprises 163 residues: Staphylokinase (163 aa).

A signal peptide spans 1–27 (MLKRSLLFLTVLLLLFSFSSITNEVSA).

Belongs to the staphylokinase family.

The protein resides in the secreted. Potent plasminogen activator that converts plasminogen into plasmin. It forms a 1:1 complex with plasmin, which in turn activates other plasminogen molecules. This is Staphylokinase (sak) from Staphylococcus aureus (strain MW2).